Reading from the N-terminus, the 292-residue chain is tRNA (adenine(9)-N1)-methyltransferase (292 aa).

The SAM-dependent MTase TRM10-type domain occupies 72-253 (TFRKGGKKVS…ISLQSKSDKI (182 aa)).

It belongs to the class IV-like SAM-binding methyltransferase superfamily. TRM10 family.

Its subcellular location is the cytoplasm. It carries out the reaction adenosine(9) in tRNA + S-adenosyl-L-methionine = N(1)-methyladenosine(9) in tRNA + S-adenosyl-L-homocysteine + H(+). Catalyzes the S-adenosyl-L-methionine-dependent formation of N(1)-methyladenine at position 9 (m1A9) in tRNA. The protein is tRNA (adenine(9)-N1)-methyltransferase of Sulfolobus acidocaldarius (strain ATCC 33909 / DSM 639 / JCM 8929 / NBRC 15157 / NCIMB 11770).